Here is a 259-residue protein sequence, read N- to C-terminus: Protein odd-skipped-related 1 (259 aa).

C2H2-type zinc fingers lie at residues 168 to 190 (FVCK…ERTH), 196 to 218 (YTCD…RYIH), and 224 to 246 (FKCQ…KTLH).

The protein belongs to the Odd C2H2-type zinc-finger protein family.

It localises to the nucleus. In terms of biological role, transcriptional repressor. Required for pronephric kidney development. This Xenopus tropicalis (Western clawed frog) protein is Protein odd-skipped-related 1.